Here is an 85-residue protein sequence, read N- to C-terminus: Coiled-coil-helix-coiled-coil-helix domain-containing protein 7 (85 aa).

Residues 13-55 form the CHCH domain; that stretch reads INPCLSESDASTRCLDENNYDRERCSTYFLRYKNCRRFWNSIV. 2 short sequence motifs (cx9C motif) span residues 16-26 and 37-47; these read CLSESDASTRC and CSTYFLRYKNC. Cystine bridges form between Cys-16-Cys-47 and Cys-26-Cys-37.

The protein belongs to the CHCHD7 family. In terms of assembly, monomer.

The protein resides in the mitochondrion intermembrane space. The polypeptide is Coiled-coil-helix-coiled-coil-helix domain-containing protein 7 (CHCHD7) (Homo sapiens (Human)).